The chain runs to 301 residues: Putative S-adenosyl-L-methionine-dependent methyltransferase MUL_0450 (301 aa).

S-adenosyl-L-methionine is bound by residues aspartate 127 and aspartate 156–leucine 157.

This sequence belongs to the UPF0677 family.

In terms of biological role, exhibits S-adenosyl-L-methionine-dependent methyltransferase activity. This is Putative S-adenosyl-L-methionine-dependent methyltransferase MUL_0450 from Mycobacterium ulcerans (strain Agy99).